A 99-amino-acid polypeptide reads, in one-letter code: MSRRCELTGIGPMVGHNVSHSNIKTKRRFLPALSPATLQSESLGQSFKLRISNAALRTLDFKGGLDTFLLGAKDEQLSPRALKIKAQVKAKAKAAAQAA.

The protein belongs to the bacterial ribosomal protein bL28 family.

This Caulobacter vibrioides (strain ATCC 19089 / CIP 103742 / CB 15) (Caulobacter crescentus) protein is Large ribosomal subunit protein bL28.